The primary structure comprises 162 residues: Endoribonuclease YbeY (162 aa).

Residues histidine 118, histidine 122, and histidine 128 each contribute to the Zn(2+) site.

The protein belongs to the endoribonuclease YbeY family. The cofactor is Zn(2+).

The protein resides in the cytoplasm. Single strand-specific metallo-endoribonuclease involved in late-stage 70S ribosome quality control and in maturation of the 3' terminus of the 16S rRNA. This Caulobacter sp. (strain K31) protein is Endoribonuclease YbeY.